A 598-amino-acid polypeptide reads, in one-letter code: Mitochondrial distribution and morphology protein 30 (598 aa).

One can recognise an F-box domain in the interval 13 to 59; it reads SFTIDHLPPEIWLCISKLVGTSDLHNLCLINRRLYLTITSDEIWKRR.

Interacts with SKP1. Component of the probable SCF(MDM30) complex containing CDC53, SKP1, RBX1 and MDM30. Interacts with SKP1 and FZO1.

Its subcellular location is the cytoplasm. The protein resides in the mitochondrion. The protein operates within protein modification; protein ubiquitination. Functionally, substrate recognition component of a SCF (SKP1-CUL1-F-box protein) E3 ubiquitin-protein ligase complex which mediates the ubiquitination and subsequent proteasomal degradation of target proteins. Probably recognizes and binds to phosphorylated target proteins. Recognizes FZO1 and regulates the amount of FZO1. Regulatory factor for the mitochondrial fusion machinery. Required for mitochondrial DNA maintenance. This chain is Mitochondrial distribution and morphology protein 30 (MDM30), found in Saccharomyces cerevisiae (strain ATCC 204508 / S288c) (Baker's yeast).